The sequence spans 378 residues: MDNSTTAAEVSAPTDYDYNSTSYDDDNPYAAPCSLTETWNFLGRFAPVAYILVFILALVGNILVLCVIRRYRQSRHSPCSFSLTDTFLLHLAVSDLLLAATLPFFAVEWISEWVFGKVMCKITGALFSLNVYCGVLFLACISFDRYLAIVHAINISWRRKTCHAQLACAFIWVICLGLSMVDMHFRDLVEIPGMNRMVCQIVYSEQYSKQWQIGMQLVSMVLGFILPLLVMLYCYLHIFKALCHATRRQKRRSLRLIISLVIVFVISWAPYNALRMTDSLQMLGVIVKSCALNNVLDVGILVTESLGLAHCALNPLLYGLVGVKFRRELAQMCKAALGPQGCLGLVGWANGRGSSTRRPTGSFSSVETENTSYFSVMA.

Residues 1–47 (MDNSTTAAEVSAPTDYDYNSTSYDDDNPYAAPCSLTETWNFLGRFAP) lie on the Extracellular side of the membrane. 2 N-linked (GlcNAc...) asparagine glycosylation sites follow: N3 and N19. A helical membrane pass occupies residues 48-68 (VAYILVFILALVGNILVLCVI). Residues 69 to 86 (RRYRQSRHSPCSFSLTDT) lie on the Cytoplasmic side of the membrane. A helical transmembrane segment spans residues 87-107 (FLLHLAVSDLLLAATLPFFAV). Residues 108–121 (EWISEWVFGKVMCK) lie on the Extracellular side of the membrane. The cysteines at positions 120 and 199 are disulfide-linked. The chain crosses the membrane as a helical span at residues 122-142 (ITGALFSLNVYCGVLFLACIS). The Cytoplasmic segment spans residues 143–164 (FDRYLAIVHAINISWRRKTCHA). The helical transmembrane segment at 165-185 (QLACAFIWVICLGLSMVDMHF) threads the bilayer. Over 186 to 212 (RDLVEIPGMNRMVCQIVYSEQYSKQWQ) the chain is Extracellular. A helical membrane pass occupies residues 213 to 233 (IGMQLVSMVLGFILPLLVMLY). Over 234–253 (CYLHIFKALCHATRRQKRRS) the chain is Cytoplasmic. A helical membrane pass occupies residues 254–274 (LRLIISLVIVFVISWAPYNAL). Over 275–304 (RMTDSLQMLGVIVKSCALNNVLDVGILVTE) the chain is Extracellular. The helical transmembrane segment at 305-325 (SLGLAHCALNPLLYGLVGVKF) threads the bilayer. Residues 326–378 (RRELAQMCKAALGPQGCLGLVGWANGRGSSTRRPTGSFSSVETENTSYFSVMA) lie on the Cytoplasmic side of the membrane.

It belongs to the G-protein coupled receptor 1 family.

It is found in the cell membrane. Receptor for the C-X-C chemokines cxcl11.1 and cxcl11.6. Promotes macrophage chemotaxis to sites of bacterial infection. In Danio rerio (Zebrafish), this protein is C-X-C chemokine receptor type 3-2.